The chain runs to 503 residues: Glycosyltransferase family 92 protein ZK381.2 (503 aa).

The helical transmembrane segment at 7 to 27 (YKPCLLIILIFNSVILLFILI) threads the bilayer. The region spanning 156 to 441 (KPVIICISPQ…FKCYFDSFYK (286 aa)) is the GT92 domain.

Belongs to the glycosyltransferase 92 family.

It is found in the membrane. This chain is Glycosyltransferase family 92 protein ZK381.2, found in Caenorhabditis elegans.